Consider the following 561-residue polypeptide: Potassium-transporting ATPase potassium-binding subunit (561 aa).

A run of 12 helical transmembrane segments spans residues 5-25, 60-80, 86-106, 130-150, 177-197, 247-267, 281-301, 324-344, 376-396, 415-435, 491-511, and 533-553; these read LAAG…YVPV, YGYA…LYFL, VLPL…NTAI, VGLA…AIAL, ILLP…VIQS, PTPL…VCLT, LTLL…TLAA, FGIP…TGAV, GLYG…LLVG, ALSI…TVIL, ICML…AGAL, and GLLT…ALAL.

This sequence belongs to the KdpA family. The system is composed of three essential subunits: KdpA, KdpB and KdpC.

Its subcellular location is the cell membrane. Functionally, part of the high-affinity ATP-driven potassium transport (or Kdp) system, which catalyzes the hydrolysis of ATP coupled with the electrogenic transport of potassium into the cytoplasm. This subunit binds the extracellular potassium ions and delivers the ions to the membrane domain of KdpB through an intramembrane tunnel. This chain is Potassium-transporting ATPase potassium-binding subunit, found in Rhodococcus erythropolis (strain PR4 / NBRC 100887).